The sequence spans 370 residues: Serine/threonine-protein kinase SAPK5 (370 aa).

Residues 4 to 260 (YEPVREIGAG…MGEIKSHPWF (257 aa)) form the Protein kinase domain. ATP is bound by residues 10 to 18 (IGAGNFGVA) and Lys-33. The active-site Proton acceptor is Asp-123. The disordered stretch occupies residues 312–370 (EAQTVPKPDKPVSGYGWGTDDDDDDQQPAEEEDEEDDYDRTVREVHASVDLDMSNLQIS). The span at 330–349 (TDDDDDDQQPAEEEDEEDDY) shows a compositional bias: acidic residues. The segment covering 350–360 (DRTVREVHASV) has biased composition (basic and acidic residues).

This sequence belongs to the protein kinase superfamily. Ser/Thr protein kinase family. Post-translationally, may be phosphorylated. In terms of tissue distribution, expressed in leaf blades, leaf sheaths and roots. Expressed in shoots and roots of young seedlings.

It is found in the cytoplasm. The protein localises to the nucleus. The enzyme catalyses L-seryl-[protein] + ATP = O-phospho-L-seryl-[protein] + ADP + H(+). It carries out the reaction L-threonyl-[protein] + ATP = O-phospho-L-threonyl-[protein] + ADP + H(+). With respect to regulation, activated by hyperosmotic stress. May play a role in signal transduction of hyperosmotic response. The polypeptide is Serine/threonine-protein kinase SAPK5 (SAPK5) (Oryza sativa subsp. japonica (Rice)).